Consider the following 123-residue polypeptide: Large ribosomal subunit protein uL29 (123 aa).

Residues 84–123 form a disordered region; sequence RPKKTRAMRRRLNKHEEGLKTKKQQRKERLYPPRKYAVKA. The segment covering 86–96 has biased composition (basic residues); that stretch reads KKTRAMRRRLN.

The protein belongs to the universal ribosomal protein uL29 family. As to quaternary structure, component of the large ribosomal subunit.

The protein resides in the cytoplasm. In terms of biological role, component of the large ribosomal subunit. The ribosome is a large ribonucleoprotein complex responsible for the synthesis of proteins in the cell. The sequence is that of Large ribosomal subunit protein uL29 (RPL35) from Ophiophagus hannah (King cobra).